The following is a 341-amino-acid chain: Glyceraldehyde-3-phosphate dehydrogenase 3 (341 aa).

NAD(+) is bound by residues 13-14 (RI), Asp-35, and Arg-85. D-glyceraldehyde 3-phosphate contacts are provided by residues 157–159 (SCT), Thr-188, 217–218 (TG), and Arg-240. Cys-158 (nucleophile) is an active-site residue. Residue Asn-322 participates in NAD(+) binding.

It belongs to the glyceraldehyde-3-phosphate dehydrogenase family. As to quaternary structure, homotetramer.

Its subcellular location is the cytoplasm. The catalysed reaction is D-glyceraldehyde 3-phosphate + phosphate + NAD(+) = (2R)-3-phospho-glyceroyl phosphate + NADH + H(+). Its pathway is carbohydrate degradation; glycolysis; pyruvate from D-glyceraldehyde 3-phosphate: step 1/5. The sequence is that of Glyceraldehyde-3-phosphate dehydrogenase 3 (gpd-3) from Caenorhabditis elegans.